The sequence spans 225 residues: Endonuclease V (225 aa).

The Mg(2+) site is built by D43 and D110. 2 interaction with target DNA regions span residues 139–141 (KSR) and 214–221 (HIYTQRLK).

Belongs to the endonuclease V family. It depends on Mg(2+) as a cofactor.

The protein localises to the cytoplasm. It catalyses the reaction Endonucleolytic cleavage at apurinic or apyrimidinic sites to products with a 5'-phosphate.. Functionally, DNA repair enzyme involved in the repair of deaminated bases. Selectively cleaves double-stranded DNA at the second phosphodiester bond 3' to a deoxyinosine leaving behind the intact lesion on the nicked DNA. In vitro, can also cleave single-stranded substrates with inosine, double-stranded DNA with apurinic sites, or DNA sites with uracil or a mismatched base. When present in molar excess, two protein molecules can bind to the same DNA substrate and effect cleavage of both strands (in vitro). The polypeptide is Endonuclease V (Thermotoga maritima (strain ATCC 43589 / DSM 3109 / JCM 10099 / NBRC 100826 / MSB8)).